The sequence spans 84 residues: Beta-toxin Ct16 (84 aa).

Residues 1 to 19 (MNYFILLFVATFLLLDVNC) form the signal peptide. In terms of domain architecture, LCN-type CS-alpha/beta spans 21–80 (KDGYPVDANNCKFECWKNEYCDELCKAKRAESGYCYKLKLSCWCEGLPDDEPTKTSDRCY). 4 disulfides stabilise this stretch: cysteine 31/cysteine 79, cysteine 35/cysteine 55, cysteine 41/cysteine 62, and cysteine 45/cysteine 64. Threonine 82 carries the post-translational modification Threonine amide.

This sequence belongs to the long (4 C-C) scorpion toxin superfamily. Sodium channel inhibitor family. Alpha subfamily. As to expression, expressed by the venom gland.

The protein localises to the secreted. Functionally, alpha toxins bind voltage-independently at site-3 of sodium channels (Nav) and inhibit the inactivation of the activated channels, thereby blocking neuronal transmission. Is possibly toxic to mice. This chain is Beta-toxin Ct16, found in Centruroides tecomanus (Scorpion).